We begin with the raw amino-acid sequence, 59 residues long: MIASIWYAELGCASAIAFIFPLIFCVKLDYKCIGIFIINSLHDQYYKPDIMLERAIIIA.

An N-terminal signal peptide occupies residues 1 to 17 (MIASIWYAELGCASAIA).

This is an uncharacterized protein from Rickettsia prowazekii (strain Madrid E).